The sequence spans 116 residues: Protein lin-52 homolog (116 aa).

Serine 28 and serine 53 each carry phosphoserine.

This sequence belongs to the lin-52 family. Component of the DREAM complex (also named LINC complex) at least composed of E2F4, E2F5, LIN9, LIN37, LIN52, LIN54, MYBL1, MYBL2, RBL1, RBL2, RBBP4, TFDP1 and TFDP2. The complex exists in quiescent cells where it represses cell cycle-dependent genes. It dissociates in S phase when LIN9, LIN37, LIN52 and LIN54 form a subcomplex that binds to MYBL2.

This chain is Protein lin-52 homolog (LIN52), found in Homo sapiens (Human).